The following is a 172-amino-acid chain: Large ribosomal subunit protein uL10 (172 aa).

Belongs to the universal ribosomal protein uL10 family. Part of the ribosomal stalk of the 50S ribosomal subunit. The N-terminus interacts with L11 and the large rRNA to form the base of the stalk. The C-terminus forms an elongated spine to which L12 dimers bind in a sequential fashion forming a multimeric L10(L12)X complex.

Functionally, forms part of the ribosomal stalk, playing a central role in the interaction of the ribosome with GTP-bound translation factors. The sequence is that of Large ribosomal subunit protein uL10 (rplJ) from Brucella abortus biovar 1 (strain 9-941).